We begin with the raw amino-acid sequence, 257 residues long: Ribonuclease HII (257 aa).

The 186-residue stretch at 72–257 folds into the RNase H type-2 domain; sequence TYIAGIDEVG…FAPIKDMIKK (186 aa). A divalent metal cation contacts are provided by Asp78, Glu79, and Asp170.

Belongs to the RNase HII family. The cofactor is Mn(2+). Mg(2+) serves as cofactor.

It localises to the cytoplasm. The catalysed reaction is Endonucleolytic cleavage to 5'-phosphomonoester.. Endonuclease that specifically degrades the RNA of RNA-DNA hybrids. The polypeptide is Ribonuclease HII (Bacillus anthracis (strain A0248)).